A 261-amino-acid polypeptide reads, in one-letter code: MPHASAFLEVIPAIDLLQGRAVRLYQGDYAQAEQVAADPVQQAEIWATQGAPRLHVVDLDGAKSGDPVNLPIIADIVRKLAIPVQVGGGIRSLERARQLLDLGVERVIVGTVAVEDPALLEAMTQALPGRIWVGIDARQGQVATRGWLSTTPLAATELVQRVQAQGAAGIIYTDIGRDGTLAGPNLEQLRQILAVSRLPVIASGGIGSLTDLLALLSLPGLAGAILGKALYSGAISLPEALRAVGPGRWQDLPPETGSRWA.

Catalysis depends on Asp-15, which acts as the Proton acceptor. The Proton donor role is filled by Asp-136.

It belongs to the HisA/HisF family.

The protein localises to the cytoplasm. The enzyme catalyses 1-(5-phospho-beta-D-ribosyl)-5-[(5-phospho-beta-D-ribosylamino)methylideneamino]imidazole-4-carboxamide = 5-[(5-phospho-1-deoxy-D-ribulos-1-ylimino)methylamino]-1-(5-phospho-beta-D-ribosyl)imidazole-4-carboxamide. Its pathway is amino-acid biosynthesis; L-histidine biosynthesis; L-histidine from 5-phospho-alpha-D-ribose 1-diphosphate: step 4/9. The polypeptide is 1-(5-phosphoribosyl)-5-[(5-phosphoribosylamino)methylideneamino] imidazole-4-carboxamide isomerase (Synechococcus sp. (strain JA-3-3Ab) (Cyanobacteria bacterium Yellowstone A-Prime)).